The chain runs to 429 residues: 3-phosphoshikimate 1-carboxyvinyltransferase (429 aa).

3 residues coordinate 3-phosphoshikimate: Lys23, Ser24, and Arg28. A phosphoenolpyruvate-binding site is contributed by Lys23. Phosphoenolpyruvate contacts are provided by Gly95 and Arg123. Residues Ser168, Gln170, Asp316, and Lys343 each contribute to the 3-phosphoshikimate site. Gln170 contributes to the phosphoenolpyruvate binding site. Asp316 functions as the Proton acceptor in the catalytic mechanism. Positions 347 and 389 each coordinate phosphoenolpyruvate.

Belongs to the EPSP synthase family. Monomer.

Its subcellular location is the cytoplasm. It carries out the reaction 3-phosphoshikimate + phosphoenolpyruvate = 5-O-(1-carboxyvinyl)-3-phosphoshikimate + phosphate. It participates in metabolic intermediate biosynthesis; chorismate biosynthesis; chorismate from D-erythrose 4-phosphate and phosphoenolpyruvate: step 6/7. Functionally, catalyzes the transfer of the enolpyruvyl moiety of phosphoenolpyruvate (PEP) to the 5-hydroxyl of shikimate-3-phosphate (S3P) to produce enolpyruvyl shikimate-3-phosphate and inorganic phosphate. The protein is 3-phosphoshikimate 1-carboxyvinyltransferase of Bacillus cereus (strain B4264).